We begin with the raw amino-acid sequence, 251 residues long: Large ribosomal subunit protein uL4 (251 aa).

It belongs to the universal ribosomal protein uL4 family. As to quaternary structure, part of the 50S ribosomal subunit.

Functionally, one of the primary rRNA binding proteins, this protein initially binds near the 5'-end of the 23S rRNA. It is important during the early stages of 50S assembly. It makes multiple contacts with different domains of the 23S rRNA in the assembled 50S subunit and ribosome. Its function is as follows. Forms part of the polypeptide exit tunnel. The sequence is that of Large ribosomal subunit protein uL4 from Methanothrix thermoacetophila (strain DSM 6194 / JCM 14653 / NBRC 101360 / PT) (Methanosaeta thermophila).